A 143-amino-acid chain; its full sequence is Transcription antitermination protein NusB (143 aa).

It belongs to the NusB family.

Its function is as follows. Involved in transcription antitermination. Required for transcription of ribosomal RNA (rRNA) genes. Binds specifically to the boxA antiterminator sequence of the ribosomal RNA (rrn) operons. This Streptomyces griseus subsp. griseus (strain JCM 4626 / CBS 651.72 / NBRC 13350 / KCC S-0626 / ISP 5235) protein is Transcription antitermination protein NusB.